The following is a 1369-amino-acid chain: MGGKNKKHKAPAAAVVRAAVSASRAKSAEAGIAGEAQSKKPVSRPATAAAAAAGSREPRVKQGPKIYSFNSTNDSSGPANLDKSILKVVINNKLEQRIIGVINEHKKQNNDKGMISGRLTAKKLQDLYMALQAFSFKTKDIEDAMTNTLLYGGDLHSALDWLCLNLSDDALPEGFSQEFEEQQPKSRPKFQSPQIQATISPPLQPKTKTYEEDPKSKPKKEEKNMEVNMKEWILRYAEQQNEEEKNENSKSLEEEEKFDPNERYLHLAAKLLDAKEQAATFKLEKNKQGQKEAQEKIRKFQREMETLEDHPVFNPAMKISHQQNERKKPPVATEGESALNFNLFEKSAAATEEEKDKKKEPHDVRNFDYTARSWTGKSPKQFLIDWVRKNLPKSPNPSFEKVPVGRYWKCRVRVIKSEDDVLVVCPTILTEDGMQAQHLGATLALYRLVKGQSVHQLLPPTYRDVWLEWSDAEKKREELNKMETNKPRDLFIAKLLNKLKQQQQQQQQHSENKRENSEDPEESWENLVSDEDFSALSLESANVEDLEPVRNLFRKLQSTPKYQKLLKERQQLPVFKHRDSIVETLKRHRVVVVAGETGSGKSTQVPHFLLEDLLLNEWEASKCNIVCTQPRRISAVSLANRVCDELGCENGPGGRNSLCGYQIRMESRACESTRLLYCTTGVLLRKLQEDGLLSNVSHVIVDEVHERSVQSDFLLIILKEILQKRSDLHLILMSATVDSEKFSTYFTHCPILRISGRSYPVEVFHLEDIIEETGFVLEKDSEYCQKFLEEEEEVTINVTSKAGGIKKYQEYIPVQTGAHADLNPFYQKYSSRTQHAILYMNPHKINLDLILELLAYLDKSPQFRNIEGAVLIFLPGLAHIQQLYDLLSNDRRFYSERYKVIALHSILSTQDQAAAFTLPPPGVRKIVLATNIAETGITIPDVVFVIDTGRTKENKYHESSQMSSLVETFVSKASALQRQGRAGRVRDGFCFRMYTRERFEGFMDYSVPEILRVPLEELCLHIMKCNLGSPEDFLSKALDPPQLQVISNAMNLLRKIGACELNEPKLTPLGQHLAALPVNVKIGKMLIFGAIFGCLDPVATLAAVMTEKSPFTTPIGRKDEADLAKSALAMADSDHLTIYNAYLGWKKARQEGGYRSEITYCRRNFLNRTSLLTLEDVKQELIKLVKAAGFSSSTTSTSWEGNRASQTLSFQEIALLKAVLVAGLYDNVGKIIYTKSVDVTEKLACIVETAQGKAQVHPSSVNRDLQTHGWLLYQEKIRYARVYLRETTLITPFPVLLFGGDIEVQHRERLLSIDGWIYFQAPVKIAVIFKQLRVLIDSVLRKKLENPKMSLENDKILQIITELIKTENN.

Disordered regions lie at residues 27 to 75 and 176 to 226; these read SAEA…TNDS and SQEF…KNME. Residues S71, S192, and S200 each carry the phosphoserine modification. Residues 189–201 show a composition bias toward polar residues; the sequence is KFQSPQIQATISP. Positions 208 to 226 are enriched in basic and acidic residues; sequence KTYEEDPKSKPKKEEKNME. 3 coiled-coil regions span residues 222–256, 283–310, and 492–519; these read EKNM…EEEE, LEKN…LEDH, and IAKL…NSED. Residues 502 to 526 form a disordered region; it reads QQQQQQQHSENKRENSEDPEESWEN. The Helicase ATP-binding domain maps to 582 to 755; it reads VETLKRHRVV…FTHCPILRIS (174 aa). Residue 595–602 coordinates ATP; sequence GETGSGKS. Residues 702-705 carry the DEAH box motif; the sequence is DEVH. The Helicase C-terminal domain maps to 849–1026; it reads LILELLAYLD…ELCLHIMKCN (178 aa).

This sequence belongs to the DEAD box helicase family. DEAH subfamily. Part of the 43S pre-initiation complex (PIC) that contains at least Met-tRNA, EIF1, EIF1A (EIF1AX or EIF1AY), EIF2S1, EIF2S2, EIF2S3, EIF3A, EIF3B, EIF3C, EIF3D, EIF3E, EIF3F, EIF3G, EIF3H, EIF3I, EIF3J, EIF3K, EIF3L, EIF3M, DHX29 and the 40S ribosomal subunit.

The protein localises to the cytoplasm. It carries out the reaction ATP + H2O = ADP + phosphate + H(+). In terms of biological role, ATP-binding RNA helicase involved in translation initiation. Part of the 43S pre-initiation complex that is required for efficient initiation on mRNAs of higher eukaryotes with structured 5'-UTRs by promoting efficient NTPase-dependent 48S complex formation. Specifically binds to the 40S ribosome near the mRNA entrance. Does not possess a processive helicase activity. This Homo sapiens (Human) protein is ATP-dependent RNA helicase DHX29.